The following is a 100-amino-acid chain: Urease subunit gamma (100 aa).

It belongs to the urease gamma subunit family. Heterotrimer of UreA (gamma), UreB (beta) and UreC (alpha) subunits. Three heterotrimers associate to form the active enzyme.

Its subcellular location is the cytoplasm. The catalysed reaction is urea + 2 H2O + H(+) = hydrogencarbonate + 2 NH4(+). The protein operates within nitrogen metabolism; urea degradation; CO(2) and NH(3) from urea (urease route): step 1/1. In Paracidovorax citrulli (strain AAC00-1) (Acidovorax citrulli), this protein is Urease subunit gamma.